Reading from the N-terminus, the 256-residue chain is Small ribosomal subunit protein uS2 (256 aa).

It belongs to the universal ribosomal protein uS2 family.

In Brucella anthropi (strain ATCC 49188 / DSM 6882 / CCUG 24695 / JCM 21032 / LMG 3331 / NBRC 15819 / NCTC 12168 / Alc 37) (Ochrobactrum anthropi), this protein is Small ribosomal subunit protein uS2.